Here is a 65-residue protein sequence, read N- to C-terminus: U15-hexatoxin-Mg1a (65 aa).

In terms of processing, contains 4 disulfide bonds. Expressed by the venom gland.

It is found in the secreted. Its function is as follows. Intrathorax injection into crickets causes paralysis prolonged for more than 60 minutes, followed by recovery. This chain is U15-hexatoxin-Mg1a, found in Macrothele gigas (Japanese funnel web spider).